Reading from the N-terminus, the 806-residue chain is ATP-dependent zinc metalloprotease FTSH 11, chloroplastic/mitochondrial (806 aa).

Residues Met-1 to Arg-63 constitute a chloroplast and mitochondrion transit peptide. The span at Phe-106–Gly-116 shows a compositional bias: basic and acidic residues. The tract at residues Phe-106–Glu-130 is disordered. A helical transmembrane segment spans residues Leu-301 to Ala-321. Residue Gly-402 to Thr-409 participates in ATP binding. His-620 is a binding site for Zn(2+). Residue Glu-621 is part of the active site. Residues His-624 and Asp-698 each contribute to the Zn(2+) site.

This sequence in the N-terminal section; belongs to the AAA ATPase family. In the C-terminal section; belongs to the peptidase M41 family. As to quaternary structure, homooligomer. It depends on Zn(2+) as a cofactor.

It is found in the mitochondrion inner membrane. The protein resides in the plastid. Its subcellular location is the chloroplast thylakoid membrane. Probable ATP-dependent zinc metallopeptidase. Involved in the assembly and/or stability of the complexes I and V. Involved in thermotolerance but not in high light stress resistance or in the assembly/stability of the complexes I and V of the mitochondrial oxidative phosphorylation system. This is ATP-dependent zinc metalloprotease FTSH 11, chloroplastic/mitochondrial (FTSH11) from Arabidopsis thaliana (Mouse-ear cress).